A 345-amino-acid polypeptide reads, in one-letter code: Beta-2-glycoprotein 1 (345 aa).

Residues 1 to 19 form the signal peptide; that stretch reads MVSPVLALFSAFLCHVAIA. Sushi domains are found at residues 21–81, 82–139, 140–202, and 203–262; these read RICP…RCVP, RVCP…ACAR, ITCP…ECLE, and VKCP…TCRE. Intrachain disulfides connect cysteine 23-cysteine 66, cysteine 51-cysteine 79, cysteine 84-cysteine 124, cysteine 110-cysteine 137, cysteine 142-cysteine 188, cysteine 174-cysteine 200, cysteine 205-cysteine 248, cysteine 234-cysteine 260, cysteine 264-cysteine 315, cysteine 300-cysteine 325, and cysteine 307-cysteine 345. O-linked (GalNAc...) threonine glycosylation is present at threonine 33. Asparagine 105, asparagine 117, asparagine 162, asparagine 183, and asparagine 193 each carry an N-linked (GlcNAc...) asparagine glycan. Residues 263 to 345 form a sushi-like region; the sequence is SCKLPVKKAT…KTDASELTPC (83 aa).

In terms of tissue distribution, expressed by the liver and secreted in plasma.

It localises to the secreted. Functionally, binds to various kinds of negatively charged substances such as heparin, phospholipids, and dextran sulfate. May prevent activation of the intrinsic blood coagulation cascade by binding to phospholipids on the surface of damaged cells. The chain is Beta-2-glycoprotein 1 (Apoh) from Mus musculus (Mouse).